The sequence spans 97 residues: Carboxypeptidase inhibitor (97 aa).

An N-terminal signal peptide occupies residues 1 to 22 (MAATLPVFAVVFFAMVLASSQA).

It localises to the secreted. Functionally, potent competitive inhibitor of metallo-carboxypeptidases CPA1, CPA2, CPB, CPN, and TAF1a. Also inhibits human CPA4. Accelerates fibrinolysis in vitro and may contribute to the maintenance of host blood liquidity during feeding. The chain is Carboxypeptidase inhibitor from Rhipicephalus bursa (Tick).